A 296-amino-acid polypeptide reads, in one-letter code: NAD kinase (296 aa).

The active-site Proton acceptor is the Asp72. NAD(+) is bound by residues Asp72–Gly73, Asn146–Asp147, Arg157, Lys174, Asp176, Thr187–Ser192, and Gln247.

It belongs to the NAD kinase family. A divalent metal cation is required as a cofactor.

The protein localises to the cytoplasm. It catalyses the reaction NAD(+) + ATP = ADP + NADP(+) + H(+). Functionally, involved in the regulation of the intracellular balance of NAD and NADP, and is a key enzyme in the biosynthesis of NADP. Catalyzes specifically the phosphorylation on 2'-hydroxyl of the adenosine moiety of NAD to yield NADP. This chain is NAD kinase, found in Pseudomonas syringae pv. tomato (strain ATCC BAA-871 / DC3000).